The primary structure comprises 812 residues: DNA gyrase subunit A (812 aa).

The Topo IIA-type catalytic domain occupies 31 to 496 (IPDVRDGLKP…GNTDFNVEDV (466 aa)). The O-(5'-phospho-DNA)-tyrosine intermediate role is filled by Y119. The GyrA-box motif lies at 523-529 (QGRGGKG).

It belongs to the type II topoisomerase GyrA/ParC subunit family. In terms of assembly, heterotetramer, composed of two GyrA and two GyrB chains. In the heterotetramer, GyrA contains the active site tyrosine that forms a transient covalent intermediate with DNA, while GyrB binds cofactors and catalyzes ATP hydrolysis.

Its subcellular location is the cytoplasm. The catalysed reaction is ATP-dependent breakage, passage and rejoining of double-stranded DNA.. Its function is as follows. A type II topoisomerase that negatively supercoils closed circular double-stranded (ds) DNA in an ATP-dependent manner to modulate DNA topology and maintain chromosomes in an underwound state. Negative supercoiling favors strand separation, and DNA replication, transcription, recombination and repair, all of which involve strand separation. Also able to catalyze the interconversion of other topological isomers of dsDNA rings, including catenanes and knotted rings. Type II topoisomerases break and join 2 DNA strands simultaneously in an ATP-dependent manner. The sequence is that of DNA gyrase subunit A from Kosmotoga olearia (strain ATCC BAA-1733 / DSM 21960 / TBF 19.5.1).